The chain runs to 240 residues: 1-(5-phosphoribosyl)-5-[(5-phosphoribosylamino)methylideneamino] imidazole-4-carboxamide isomerase (240 aa).

The active-site Proton acceptor is the Asp-9. Asp-131 acts as the Proton donor in catalysis.

Belongs to the HisA/HisF family.

Its subcellular location is the cytoplasm. It catalyses the reaction 1-(5-phospho-beta-D-ribosyl)-5-[(5-phospho-beta-D-ribosylamino)methylideneamino]imidazole-4-carboxamide = 5-[(5-phospho-1-deoxy-D-ribulos-1-ylimino)methylamino]-1-(5-phospho-beta-D-ribosyl)imidazole-4-carboxamide. Its pathway is amino-acid biosynthesis; L-histidine biosynthesis; L-histidine from 5-phospho-alpha-D-ribose 1-diphosphate: step 4/9. This is 1-(5-phosphoribosyl)-5-[(5-phosphoribosylamino)methylideneamino] imidazole-4-carboxamide isomerase from Cytophaga hutchinsonii (strain ATCC 33406 / DSM 1761 / CIP 103989 / NBRC 15051 / NCIMB 9469 / D465).